The sequence spans 386 residues: MDFNLSNSQSDIYESAYRFACDVLDQDAQTRISQKILSTELWKKAAAYGFAHGPVSHQFGGSELGALDTALMIEALGKGSRDIGLSFSLCAHLCACVIPLYRFGSSELKDKYLESLVTGKLIAANAATEPDAGSDIYNMQATAQPCEGGYILNGKKIFITNAPIADVFIIYAKTNPDHGFLGVSAFLIEKGTPGLNVGEVIPKDCLSNCPWSEIVFNDIFIPQSQRIGMEGAGGAIFHDSMIWEKGCLSALFVGGLARLLETTLEYAKARQQFGKAIGQFQSVSNRIIDMKLRLEQCRLMLYRACWKHDQGQDAEADIAMSKLLISEYAVQSGLDAIQTFGGAAMDQELGLVRHLLNMIPSRIFSGTNDIQKEIIARKLGLRGTSS.

FAD is bound by residues 125–134 (NAATEPDAGS) and 158–160 (FIT). Catalysis depends on Glu-244, which acts as the Proton acceptor. FAD-binding positions include Arg-270, Gln-281, 338-342 (QTFGG), and 367-369 (TND).

Belongs to the acyl-CoA dehydrogenase family. Requires FAD as cofactor.

The enzyme catalyses L-prolyl-[peptidyl-carrier protein] + 2 oxidized [electron-transfer flavoprotein] + H(+) = (1H-pyrrole-2-carbonyl)-[peptidyl-carrier protein] + 2 reduced [electron-transfer flavoprotein]. It participates in antibiotic biosynthesis; prodigiosin biosynthesis. Involved in the biosynthesis of 4-methoxy-2,2'-bipyrrole-5-carbaldehyde (MBC), one of the terminal products involved in the biosynthesis of the red antibiotic prodigiosin (Pig). Catalyzes the desaturation of the L-prolyl-[PigG] to yield 1H-pyrrole-2-carbonyl-[PigG]. This is L-prolyl-[peptidyl-carrier protein] dehydrogenase from Serratia sp. (strain ATCC 39006) (Prodigiosinella confusarubida).